Here is a 193-residue protein sequence, read N- to C-terminus: Chromophore lyase CpcS/CpeS 4 (193 aa).

Belongs to the CpcS/CpeS biliprotein lyase family.

Its function is as follows. Covalently attaches a chromophore to Cys residue(s) of phycobiliproteins. In Trichodesmium erythraeum (strain IMS101), this protein is Chromophore lyase CpcS/CpeS 4.